The sequence spans 534 residues: MRMQRRHLLKNAAAALAALGLPALPQWALAAKAVGLRRLGQPQPFDYAWLKGRARELAKAPYKSHKQVLPGPLEALNWDQYQSIRYRQDHALWADGNGKFQAKFFHLGLYFHTPVHIYDIVDGKAQQLAYDPAAFDYGKSGLGGKQLPKDLGFAGFRLNTRKDTERDFSAFLGASYFRAVGKEGQYGQSARGLAIDTGTGGPEEFPDFIAYYLEQPAADSNTVVVYGLLDSPSIAGAYRFAITNGDVLLMDIDSALYPRKTIERLGIGPCTSMYQVGENDNRMDWDWRPEIHDTDGLAMWTGGGEWIWRPLCNPPHVRFNMFVDENPRGFGLLQRDRNFDHYQDDGVFYEKRPCLWVEPKSGWGKGSVQLVEIPTVDETFDNIVAFWNPQAKPQPGQELLMGYRLYWGAQPPASAPLAHCVATRTGLGGIVGQKRSHFSWRFAVDFAGGELAALAKDPKAKVEAVLQVSRGTTEIVSARPLHELKGYRAMFDLVPPDEGTQQIDIRLYLRANGKPLTETWLYQWTPLAASERKN.

The segment at residues 1–30 (MRMQRRHLLKNAAAALAALGLPALPQWALA) is a signal peptide (tat-type signal).

The protein belongs to the OpgD/OpgG family. Predicted to be exported by the Tat system. The position of the signal peptide cleavage has not been experimentally proven.

The protein resides in the periplasm. It functions in the pathway glycan metabolism; osmoregulated periplasmic glucan (OPG) biosynthesis. Probably involved in the control of the structural glucose backbone of osmoregulated periplasmic glucans (OPGs). The sequence is that of Glucans biosynthesis protein D from Xanthomonas oryzae pv. oryzae (strain PXO99A).